The primary structure comprises 101 residues: Ubiquitin-related modifier 1 homolog (101 aa).

Gly101 is modified (1-thioglycine). A Glycyl lysine isopeptide (Gly-Lys) (interchain with K-? in acceptor proteins) cross-link involves residue Gly101.

The protein belongs to the URM1 family. Interacts with cer. In terms of processing, C-terminal thiocarboxylation occurs in 2 steps, it is first acyl-adenylated (-COAMP) via the hesA/moeB/thiF part of the MOCS3 homolog, then thiocarboxylated (-COSH) via the rhodanese domain of the MOCS3 homolog.

It is found in the cytoplasm. Its pathway is tRNA modification; 5-methoxycarbonylmethyl-2-thiouridine-tRNA biosynthesis. In terms of biological role, acts as a sulfur carrier required for 2-thiolation of mcm(5)S(2)U at tRNA wobble positions of cytosolic tRNA(Lys), tRNA(Glu) and tRNA(Gln). Serves as sulfur donor in tRNA 2-thiolation reaction by being thiocarboxylated (-COSH) at its C-terminus by MOCS3. The sulfur is then transferred to tRNA to form 2-thiolation of mcm(5)S(2)U. Also acts as a ubiquitin-like protein (UBL) that is covalently conjugated via an isopeptide bond to lysine residues of target proteins such as Prx2/Jafrac1, Ciao1, Eip71CD and GILT1. The thiocarboxylated form serves as substrate for conjugation and oxidative stress specifically induces the formation of UBL-protein conjugates. This Drosophila simulans (Fruit fly) protein is Ubiquitin-related modifier 1 homolog.